A 331-amino-acid polypeptide reads, in one-letter code: Phosphoribosylformylglycinamidine cyclo-ligase (331 aa).

This sequence belongs to the AIR synthase family.

The protein localises to the cytoplasm. It catalyses the reaction 2-formamido-N(1)-(5-O-phospho-beta-D-ribosyl)acetamidine + ATP = 5-amino-1-(5-phospho-beta-D-ribosyl)imidazole + ADP + phosphate + H(+). It participates in purine metabolism; IMP biosynthesis via de novo pathway; 5-amino-1-(5-phospho-D-ribosyl)imidazole from N(2)-formyl-N(1)-(5-phospho-D-ribosyl)glycinamide: step 2/2. The polypeptide is Phosphoribosylformylglycinamidine cyclo-ligase (Clostridium botulinum (strain 657 / Type Ba4)).